The primary structure comprises 545 residues: Glucose-6-phosphate isomerase (545 aa).

The Proton donor role is filled by E351. Residues H382 and K510 contribute to the active site.

This sequence belongs to the GPI family.

It is found in the cytoplasm. It catalyses the reaction alpha-D-glucose 6-phosphate = beta-D-fructose 6-phosphate. It participates in carbohydrate biosynthesis; gluconeogenesis. The protein operates within carbohydrate degradation; glycolysis; D-glyceraldehyde 3-phosphate and glycerone phosphate from D-glucose: step 2/4. Functionally, catalyzes the reversible isomerization of glucose-6-phosphate to fructose-6-phosphate. This Shewanella sp. (strain MR-7) protein is Glucose-6-phosphate isomerase.